We begin with the raw amino-acid sequence, 134 residues long: Lymphocyte antigen 6F (134 aa).

The signal sequence occupies residues 1-26 (MDSCHTTKSCVLILLVVLLCAERAQG). In terms of domain architecture, UPAR/Ly6 spans 27–119 (LECYNCLGVS…TGGSTWTMTR (93 aa)). 5 cysteine pairs are disulfide-bonded: Cys-29-Cys-53, Cys-32-Cys-41, Cys-46-Cys-74, Cys-78-Cys-98, and Cys-99-Cys-104. Residue Gly-112 is the site of GPI-anchor amidated glycine attachment. Positions 113–134 (STWTMTRVLLLNLGSVFLQTLL) are cleaved as a propeptide — removed in mature form.

It is found in the cell membrane. The protein is Lymphocyte antigen 6F (Ly6f) of Mus musculus (Mouse).